The sequence spans 540 residues: 2-isopropylmalate synthase (540 aa).

In terms of domain architecture, Pyruvate carboxyltransferase spans 8 to 269; that stretch reads VLIFDTTLRD…YFNPFFGREP (262 aa). Mn(2+) is bound by residues Asp-17, His-208, His-210, and Asn-244. A regulatory domain region spans residues 408–540; sequence QLRLVQVSCG…AVLADLRSGI (133 aa).

The protein belongs to the alpha-IPM synthase/homocitrate synthase family. LeuA type 1 subfamily. As to quaternary structure, homodimer. Mn(2+) is required as a cofactor.

The protein resides in the cytoplasm. The enzyme catalyses 3-methyl-2-oxobutanoate + acetyl-CoA + H2O = (2S)-2-isopropylmalate + CoA + H(+). It functions in the pathway amino-acid biosynthesis; L-leucine biosynthesis; L-leucine from 3-methyl-2-oxobutanoate: step 1/4. In terms of biological role, catalyzes the condensation of the acetyl group of acetyl-CoA with 3-methyl-2-oxobutanoate (2-ketoisovalerate) to form 3-carboxy-3-hydroxy-4-methylpentanoate (2-isopropylmalate). In Prochlorococcus marinus (strain MIT 9313), this protein is 2-isopropylmalate synthase.